A 540-amino-acid polypeptide reads, in one-letter code: MGGKKFQAMPQLPSTVLDRVFEQARQQPEAIALRRCDGTSALRYRELVAEVGGLAADLRAQSVSRGSRVLVISDNGPETYLSVLACAKLGAIAVMADGNLPIAAIERFCQITDPAAALVAPGSKMASSAVPEALHSIPVIAVDIAAVTRESEHSLDAASLAGNADQGSEDPLAMIFTSGTTGEPKAVLLANRTFFAVPDILQKEGLNWVTWVVGETTYSPLPATHIGGLWWILTCLMHGGLCVTGGENTTSLLEILTTNAVATTCLVPTLLSKLVSELKSANATVPSLRLVGYGGSRAIAADVRFIEATGVRTAQVYGLSETGCTALCLPTDDGSIVKIEAGAVGRPYPGVDVYLAATDGIGPTAPGAGPSASFGTLWIKSPANMLGYWNNPERTAEVLIDGWVNTGDLLERREDGFFYIKGRSSEMIICGGVNIAPDEVDRIAEGVSGVREAACYEIPDEEFGALVGLAVVASAELDESAARALKHTIAARFRRESEPMARPSTIVIVTDIPRTQSGKVMRASLAAAATADKARVVVRG.

Residue Thr-177 coordinates Mg(2+). ATP is bound by residues Ile-226, Val-316, and Ser-320. Glu-321 serves as a coordination point for Mg(2+). Asp-408 is an ATP binding site.

This sequence belongs to the ATP-dependent AMP-binding enzyme family. Homodimer. Mg(2+) is required as a cofactor.

It is found in the cytoplasm. The catalysed reaction is a medium-chain fatty acid + holo-[ACP] + ATP = a medium-chain fatty acyl-[ACP] + AMP + diphosphate. It carries out the reaction a medium-chain fatty acid + ATP + H(+) = a medium-chain fatty acyl-AMP + diphosphate. It catalyses the reaction a medium-chain fatty acyl-AMP + holo-[ACP] = a medium-chain fatty acyl-[ACP] + AMP + H(+). The enzyme catalyses a long-chain fatty acid + holo-[ACP] + ATP = a long-chain fatty acyl-[ACP] + AMP + diphosphate. The catalysed reaction is a long-chain fatty acid + ATP + H(+) = a long-chain fatty acyl-AMP + diphosphate. It carries out the reaction a long-chain fatty acyl-AMP + holo-[ACP] = a long-chain fatty acyl-[ACP] + AMP + H(+). It catalyses the reaction a (2E)-enoyl fatty acid + holo-[ACP] + ATP = a (2E)-enoyl-[ACP] + AMP + diphosphate. The enzyme catalyses a (2E)-enoyl fatty acid + ATP + H(+) = a (2E)-2-fatty-enoyl-AMP + diphosphate. The catalysed reaction is a (2E)-2-fatty-enoyl-AMP + holo-[ACP] = a (2E)-enoyl-[ACP] + AMP + H(+). It carries out the reaction a (3R)-3-isocyanyl-fatty acid + holo-[ACP] + ATP = a (3R)-3-isocyanyl-fatty acyl-[ACP] + AMP + diphosphate. It catalyses the reaction a (3R)-3-isocyanyl-fatty acid + ATP + H(+) = a (3R)-3-isocyanyl-fatty acyl-AMP + diphosphate. The enzyme catalyses a (3R)-3-isocyanyl-fatty acyl-AMP + holo-[ACP] = a (3R)-3-isocyanyl-fatty acyl-[ACP] + AMP + H(+). It functions in the pathway lipid metabolism; fatty acid metabolism. Acyl:acyl-carrier protein ligase involved in the biosynthesis of a unique class of isonitrile lipopeptides (INLPs) that seem to function as virulence factors in M.tuberculosis and to play a role in metal acquisition. Catalyzes the activation of medium/long-chain fatty acids as acyl-adenylates (acyl-AMP), which are then transferred to the phosphopantetheine arm of the acyl-carrier protein (ACP) MT0109. Acts twice during the INLP pathway, catalyzing the activation of a (2E)-enoyl fatty acid as well as the corresponding (3R)-3-isocyanyl-fatty acid as acyl-adenylates (acyl-AMP), and then the acyl transfer to the dedicated acyl-carrier protein MT0109. The chain is Medium/long-chain-fatty-acid--[acyl-carrier-protein] ligase FadD10 (fadD10) from Mycobacterium tuberculosis (strain CDC 1551 / Oshkosh).